Reading from the N-terminus, the 93-residue chain is MIYTIRISKKYFYKLVNMCKEYKSYRECVMKELEKKYQVKIYNSTRSHDMNIKNDLIPKVINIIFYDQENERLEELAQRLGKTKYEIIISLFK.

This is an uncharacterized protein from Sulfolobus islandicus filamentous virus (isolate Iceland/Hveragerdi) (SIFV).